A 444-amino-acid polypeptide reads, in one-letter code: ATP-dependent protease ATPase subunit HslU (444 aa).

ATP is bound by residues I18, 60–65, D256, E322, and R394; that span reads GVGKTE.

Belongs to the ClpX chaperone family. HslU subfamily. In terms of assembly, a double ring-shaped homohexamer of HslV is capped on each side by a ring-shaped HslU homohexamer. The assembly of the HslU/HslV complex is dependent on binding of ATP.

The protein localises to the cytoplasm. ATPase subunit of a proteasome-like degradation complex; this subunit has chaperone activity. The binding of ATP and its subsequent hydrolysis by HslU are essential for unfolding of protein substrates subsequently hydrolyzed by HslV. HslU recognizes the N-terminal part of its protein substrates and unfolds these before they are guided to HslV for hydrolysis. The polypeptide is ATP-dependent protease ATPase subunit HslU (Serratia proteamaculans (strain 568)).